We begin with the raw amino-acid sequence, 166 residues long: MIEIIIFSFIGNESFKTLQVFKNFHGFTILRGNRLNFYFLLILLCHLKWRRKQSIPNLYVLWAIIRIQCRTCPFMKCFDQRNLNVEEQKIQIYARNLLPYICAHNQVKTLVFFHPAIPLKNAAPFILYLINHTVTYNTPDYRMHLLWKSIAESRPHYAGCLEDIIF.

This is an uncharacterized protein from Saccharomyces cerevisiae (strain ATCC 204508 / S288c) (Baker's yeast).